The primary structure comprises 876 residues: Alanine--tRNA ligase (876 aa).

Residues His-568, His-572, Cys-670, and His-674 each coordinate Zn(2+).

The protein belongs to the class-II aminoacyl-tRNA synthetase family. The cofactor is Zn(2+).

The protein localises to the cytoplasm. The catalysed reaction is tRNA(Ala) + L-alanine + ATP = L-alanyl-tRNA(Ala) + AMP + diphosphate. Functionally, catalyzes the attachment of alanine to tRNA(Ala) in a two-step reaction: alanine is first activated by ATP to form Ala-AMP and then transferred to the acceptor end of tRNA(Ala). Also edits incorrectly charged Ser-tRNA(Ala) and Gly-tRNA(Ala) via its editing domain. The chain is Alanine--tRNA ligase from Anaplasma phagocytophilum (strain HZ).